A 154-amino-acid chain; its full sequence is MGHRNTVLTILLTISIAIMVLIATVFVSNNKTETLLQTHTQTQTLITTGRVSRFLAQNAKNGRNLNAADHCNKEEEICKSQGMYNSTMACCSNKCVDLAYDNDNCGACKNQCKFTQTCCRGECVYLAYDKRHCGECNHSCLVGEFCVYGLCNYA.

A signal peptide spans Met-1 to Ala-23.

This sequence belongs to the STIG1 family.

The chain is Stigma-specific STIG1-like protein 3 from Arabidopsis thaliana (Mouse-ear cress).